Here is a 406-residue protein sequence, read N- to C-terminus: Phosphopentomutase (406 aa).

The Mn(2+) site is built by aspartate 10, aspartate 305, histidine 310, aspartate 346, histidine 347, and histidine 358.

It belongs to the phosphopentomutase family. Requires Mn(2+) as cofactor.

The protein resides in the cytoplasm. It catalyses the reaction 2-deoxy-alpha-D-ribose 1-phosphate = 2-deoxy-D-ribose 5-phosphate. The catalysed reaction is alpha-D-ribose 1-phosphate = D-ribose 5-phosphate. Its pathway is carbohydrate degradation; 2-deoxy-D-ribose 1-phosphate degradation; D-glyceraldehyde 3-phosphate and acetaldehyde from 2-deoxy-alpha-D-ribose 1-phosphate: step 1/2. Isomerase that catalyzes the conversion of deoxy-ribose 1-phosphate (dRib-1-P) and ribose 1-phosphate (Rib-1-P) to deoxy-ribose 5-phosphate (dRib-5-P) and ribose 5-phosphate (Rib-5-P), respectively. The chain is Phosphopentomutase from Vibrio parahaemolyticus serotype O3:K6 (strain RIMD 2210633).